The primary structure comprises 209 residues: Pyridoxine/pyridoxamine 5'-phosphate oxidase (209 aa).

Substrate contacts are provided by residues 7-10 and Lys64; that span reads REDY. Residues 59 to 64, 74 to 75, Arg80, and Lys81 each bind FMN; these read RIVLLK and FT. Substrate contacts are provided by Tyr121, Arg125, and Ser129. Residues 138–139 and Trp182 contribute to the FMN site; that span reads QS. 188–190 is a substrate binding site; that stretch reads RLH. Arg192 is an FMN binding site.

This sequence belongs to the pyridoxamine 5'-phosphate oxidase family. Homodimer. Requires FMN as cofactor.

It carries out the reaction pyridoxamine 5'-phosphate + O2 + H2O = pyridoxal 5'-phosphate + H2O2 + NH4(+). The catalysed reaction is pyridoxine 5'-phosphate + O2 = pyridoxal 5'-phosphate + H2O2. Its pathway is cofactor metabolism; pyridoxal 5'-phosphate salvage; pyridoxal 5'-phosphate from pyridoxamine 5'-phosphate: step 1/1. It functions in the pathway cofactor metabolism; pyridoxal 5'-phosphate salvage; pyridoxal 5'-phosphate from pyridoxine 5'-phosphate: step 1/1. In terms of biological role, catalyzes the oxidation of either pyridoxine 5'-phosphate (PNP) or pyridoxamine 5'-phosphate (PMP) into pyridoxal 5'-phosphate (PLP). This chain is Pyridoxine/pyridoxamine 5'-phosphate oxidase, found in Actinobacillus pleuropneumoniae serotype 7 (strain AP76).